We begin with the raw amino-acid sequence, 772 residues long: Cellulosomal-scaffolding protein B (772 aa).

The Cohesin 1 domain maps to 1-80 (DPSKSFDSAI…TTFVAGGVNL (80 aa)). Residues 81 to 93 (GSSVPTTQPNVPS) form a linker (Pro/Thr-rich) region. The 147-residue stretch at 94-240 (DGVVVEIGKV…VNVGNATPTK (147 aa)) folds into the Cohesin 2 domain. Low complexity predominate over residues 235 to 276 (NATPTKGATPTNTATPTKSATATPPGHSVPTNTPTNTPANTP). Disordered regions lie at residues 235-277 (NATP…NTPV) and 438-464 (VVPSTQPVTTPPATTKPPATTIPPSDD). The segment at 241–272 (GATPTNTATPTKSATATPPGHSVPTNTPTNTP) is linker (Pro/Thr-rich). Residues 277 to 435 (VSGNLKVEFY…GVLVWGKEPG (159 aa)) enclose the CBM3 domain. The segment covering 438 to 461 (VVPSTQPVTTPPATTKPPATTIPP) has biased composition (low complexity). The tract at residues 440-461 (PSTQPVTTPPATTKPPATTIPP) is linker (Pro/Thr-rich). One can recognise a Cohesin 3 domain in the interval 462–607 (SDDPNAIKIK…ETDLINGGVL (146 aa)). The Dockerin domain occupies 704 to 771 (IMMWVGDIVK…FGATSSDYDA (68 aa)).

In terms of processing, O-glycosylated on most but not all Thr residues of the linker units.

The protein localises to the secreted. Acts as a scaffolding protein in the cellulosome. It promotes binding of cellulose to the catalytic domains of the cellulolytic enzymes probably through the binding of the nine repeated domains with dockerin domains present in catalytic subunits of the cellulosome. The protein is Cellulosomal-scaffolding protein B (cipB) of Acetivibrio thermocellus (Hungateiclostridium thermocellum).